The primary structure comprises 199 residues: GTP cyclohydrolase-2 (199 aa).

A GTP-binding site is contributed by 49–53; the sequence is RIHSE. Positions 54, 65, and 67 each coordinate Zn(2+). Residues Q70, 92-94, and T114 contribute to the GTP site; that span reads EGR. The active-site Proton acceptor is D126. Residue R128 is the Nucleophile of the active site. Positions 149 and 154 each coordinate GTP.

It belongs to the GTP cyclohydrolase II family. In terms of assembly, homodimer. Zn(2+) serves as cofactor.

The catalysed reaction is GTP + 4 H2O = 2,5-diamino-6-hydroxy-4-(5-phosphoribosylamino)-pyrimidine + formate + 2 phosphate + 3 H(+). It participates in cofactor biosynthesis; riboflavin biosynthesis; 5-amino-6-(D-ribitylamino)uracil from GTP: step 1/4. Catalyzes the conversion of GTP to 2,5-diamino-6-ribosylamino-4(3H)-pyrimidinone 5'-phosphate (DARP), formate and pyrophosphate. The sequence is that of GTP cyclohydrolase-2 from Proteus mirabilis (strain HI4320).